Here is an 85-residue protein sequence, read N- to C-terminus: Large ribosomal subunit protein bL31B (85 aa).

Belongs to the bacterial ribosomal protein bL31 family. Type B subfamily. In terms of assembly, part of the 50S ribosomal subunit.

In Micrococcus luteus (strain ATCC 4698 / DSM 20030 / JCM 1464 / CCM 169 / CCUG 5858 / IAM 1056 / NBRC 3333 / NCIMB 9278 / NCTC 2665 / VKM Ac-2230) (Micrococcus lysodeikticus), this protein is Large ribosomal subunit protein bL31B.